The following is an 895-amino-acid chain: Clathrin interactor EPSIN 2 (895 aa).

The 133-residue stretch at 18 to 150 folds into the ENTH domain; that stretch reads KKVLKVPGVE…NDKERIAEVR (133 aa). Composition is skewed to basic and acidic residues over residues 150–161, 177–236, and 245–257; these read RQKAAANRDKYR, DKYD…RSRS, and RSSE…DGHS. The segment at 150–396 is disordered; it reads RQKAAANRDK…PTVTSMSAPT (247 aa). A phosphoserine mark is found at Ser-270 and Ser-282. Over residues 329 to 348 the composition is skewed to low complexity; that stretch reads AAPEAASPPTGTNTANTTAT. 2 stretches are compositionally biased toward polar residues: residues 349–358 and 387–396; these read FVNESPSQKV and PTVTSMSAPT. Positions 409-413 match the Clathrin binding motif; sequence LADVF. Disordered stretches follow at residues 436 to 533 and 758 to 784; these read AGPA…PQEQ and KQTN…GRSG. Positions 440-454 are enriched in low complexity; that stretch reads PSFSTSQPSTQSFDD. The ALPHA-ADR binding motif lies at 454–456; it reads DPF. Polar residues-rich tracts occupy residues 464–479, 515–533, and 759–769; these read FTST…NFGA, PASQ…PQEQ, and QTNTPATSTIN.

Belongs to the epsin family. As to quaternary structure, interacts with clathrin, VTI12, DELTA-ADR and ALPHA-ADR.

It localises to the golgi apparatus. Its subcellular location is the cytoplasmic vesicle. It is found in the clathrin-coated vesicle. In terms of biological role, may have a role in transport via clathrin-coated vesicles from the trans-Golgi network to endosomes. Stimulates clathrin assembly. Binds to membranes enriched in phosphatidylinositol 3-phosphate (PtdIns(3)P). Plays an important role in protein trafficking. The chain is Clathrin interactor EPSIN 2 (EPSIN2) from Arabidopsis thaliana (Mouse-ear cress).